The sequence spans 428 residues: Glutamate-1-semialdehyde 2,1-aminomutase 1 (428 aa).

Residue Lys-268 is modified to N6-(pyridoxal phosphate)lysine.

It belongs to the class-III pyridoxal-phosphate-dependent aminotransferase family. HemL subfamily. Homodimer. Pyridoxal 5'-phosphate serves as cofactor.

It is found in the cytoplasm. It catalyses the reaction (S)-4-amino-5-oxopentanoate = 5-aminolevulinate. Its pathway is porphyrin-containing compound metabolism; protoporphyrin-IX biosynthesis; 5-aminolevulinate from L-glutamyl-tRNA(Glu): step 2/2. The protein is Glutamate-1-semialdehyde 2,1-aminomutase 1 of Bacillus cereus (strain G9842).